The following is a 464-amino-acid chain: ATP synthase subunit beta (464 aa).

Residue 151–158 (GGAGVGKT) participates in ATP binding.

Belongs to the ATPase alpha/beta chains family. As to quaternary structure, F-type ATPases have 2 components, CF(1) - the catalytic core - and CF(0) - the membrane proton channel. CF(1) has five subunits: alpha(3), beta(3), gamma(1), delta(1), epsilon(1). CF(0) has three main subunits: a(1), b(2) and c(9-12). The alpha and beta chains form an alternating ring which encloses part of the gamma chain. CF(1) is attached to CF(0) by a central stalk formed by the gamma and epsilon chains, while a peripheral stalk is formed by the delta and b chains.

Its subcellular location is the cell membrane. It catalyses the reaction ATP + H2O + 4 H(+)(in) = ADP + phosphate + 5 H(+)(out). Produces ATP from ADP in the presence of a proton gradient across the membrane. The catalytic sites are hosted primarily by the beta subunits. This chain is ATP synthase subunit beta, found in Clostridium kluyveri (strain ATCC 8527 / DSM 555 / NBRC 12016 / NCIMB 10680 / K1).